We begin with the raw amino-acid sequence, 210 residues long: Heart- and neural crest derivatives-expressed protein 2 (210 aa).

Residues 81–101 (SGAGGLMQRPVKRRGTANRKE) are disordered. The segment covering 90 to 101 (PVKRRGTANRKE) has biased composition (basic residues). Positions 92-144 (KRRGTANRKERRRTISINSAFAELRECIPNVPADTKLSKIKTLRLATSYIAYL) constitute a bHLH domain.

In terms of assembly, efficient DNA binding requires dimerization with another bHLH protein. Heart, liver and spleen.

It localises to the nucleus. Functionally, essential for cardiac morphogenesis and for the development of branchial arches. Binds DNA on E-box consensus sequence 5'-CANNTG-3'. The sequence is that of Heart- and neural crest derivatives-expressed protein 2 (hand2) from Xenopus laevis (African clawed frog).